Consider the following 164-residue polypeptide: UPF0114 protein BCI_0033 (164 aa).

3 consecutive transmembrane segments (helical) span residues Leu15–Phe35, Leu53–Val73, and Ile136–Ile156.

The protein belongs to the UPF0114 family.

It localises to the cell membrane. This is UPF0114 protein BCI_0033 from Baumannia cicadellinicola subsp. Homalodisca coagulata.